The sequence spans 162 residues: Nascent polypeptide-associated complex subunit beta (162 aa).

2 disordered regions span residues 1–39 (MPVDPAKLAALQKKSGAQSGGKGTPRRPGKKVAGRNISE) and 130–162 (EQAKKTAGGPDAAKEAGDDEIPNLVENFEDNVE). The segment covering 24 to 33 (TPRRPGKKVA) has biased composition (basic residues). The NAC-A/B domain occupies 38–103 (SEDEKKLSAT…SQQKDIAELI (66 aa)). Positions 146–162 (GDDEIPNLVENFEDNVE) are enriched in acidic residues.

This sequence belongs to the NAC-beta family. As to quaternary structure, part of the nascent polypeptide-associated complex (NAC), consisting of EGD2 and EGD1. NAC associates with ribosomes via EGD1.

It localises to the cytoplasm. It is found in the nucleus. In terms of biological role, component of the nascent polypeptide-associated complex (NAC), a dynamic component of the ribosomal exit tunnel, protecting the emerging polypeptides from interaction with other cytoplasmic proteins to ensure appropriate nascent protein targeting. The NAC complex also promotes mitochondrial protein import by enhancing productive ribosome interactions with the outer mitochondrial membrane and blocks the inappropriate interaction of ribosomes translating non-secretory nascent polypeptides with translocation sites in the membrane of the endoplasmic reticulum. EGD1 may act as a transcription factor that exert a negative effect on the expression of several genes that are transcribed by RNA polymerase II. The sequence is that of Nascent polypeptide-associated complex subunit beta (EGD1) from Yarrowia lipolytica (strain CLIB 122 / E 150) (Yeast).